The chain runs to 637 residues: Phosphomethylpyrimidine synthase (637 aa).

Substrate contacts are provided by residues N242, M271, Y300, H336, S356–G358, D397–R400, and E436. H440 serves as a coordination point for Zn(2+). Y463 contacts substrate. H504 is a Zn(2+) binding site. Residues C584, C587, and C592 each coordinate [4Fe-4S] cluster.

The protein belongs to the ThiC family. As to quaternary structure, homodimer. Requires [4Fe-4S] cluster as cofactor.

The catalysed reaction is 5-amino-1-(5-phospho-beta-D-ribosyl)imidazole + S-adenosyl-L-methionine = 4-amino-2-methyl-5-(phosphooxymethyl)pyrimidine + CO + 5'-deoxyadenosine + formate + L-methionine + 3 H(+). It participates in cofactor biosynthesis; thiamine diphosphate biosynthesis. In terms of biological role, catalyzes the synthesis of the hydroxymethylpyrimidine phosphate (HMP-P) moiety of thiamine from aminoimidazole ribotide (AIR) in a radical S-adenosyl-L-methionine (SAM)-dependent reaction. The sequence is that of Phosphomethylpyrimidine synthase from Bordetella bronchiseptica (strain ATCC BAA-588 / NCTC 13252 / RB50) (Alcaligenes bronchisepticus).